The chain runs to 149 residues: uncharacterized protein (149 aa).

Residues L2–R146 enclose the N-acetyltransferase domain.

It belongs to the acetyltransferase family.

This is an uncharacterized protein from Bacillus subtilis (strain 168).